A 254-amino-acid polypeptide reads, in one-letter code: Protein GltF (254 aa).

The first 25 residues, 1-25 (MFFKKNLTTAAICAALSVAAFSAMA), serve as a signal peptide directing secretion. The helical transmembrane segment at 213–229 (PVAITAVTFPLLIDAAV) threads the bilayer.

The protein to E.coli YhcF.

The protein resides in the cell membrane. Functionally, involved in induction of the so-called NTR enzymes in response to nitrogen deprivation, as well as in glutamate biosynthesis. May mediate the glutamate-dependent repression of the GLT operon. In Escherichia coli (strain K12), this protein is Protein GltF (gltF).